The sequence spans 253 residues: Phosphate import ATP-binding protein PstB 1 (253 aa).

The ABC transporter domain maps to 7–248 (LQIRDLSVYY…PKRKETEDYI (242 aa)). 39 to 46 (GPSGSGKS) contributes to the ATP binding site.

The protein belongs to the ABC transporter superfamily. Phosphate importer (TC 3.A.1.7) family. As to quaternary structure, the complex is composed of two ATP-binding proteins (PstB), two transmembrane proteins (PstC and PstA) and a solute-binding protein (PstS).

The protein resides in the cell membrane. It catalyses the reaction phosphate(out) + ATP + H2O = ADP + 2 phosphate(in) + H(+). In terms of biological role, part of the ABC transporter complex PstSACB involved in phosphate import. Responsible for energy coupling to the transport system. This is Phosphate import ATP-binding protein PstB 1 from Streptococcus pyogenes serotype M2 (strain MGAS10270).